A 115-amino-acid chain; its full sequence is uncharacterized protein (115 aa).

Residues 1-115 (MGETWFLTPN…ARSPERTPSP (115 aa)) are disordered. Over residues 7–17 (LTPNGQSSPGS) the composition is skewed to polar residues. Low complexity-rich tracts occupy residues 60-70 (ASCAPRATPRR) and 91-107 (SASA…WPAR).

This is an uncharacterized protein from Human adenovirus C serotype 2 (HAdV-2).